The sequence spans 339 residues: Phosphoribosylformylglycinamidine cyclo-ligase (339 aa).

The protein belongs to the AIR synthase family.

The protein localises to the cytoplasm. The catalysed reaction is 2-formamido-N(1)-(5-O-phospho-beta-D-ribosyl)acetamidine + ATP = 5-amino-1-(5-phospho-beta-D-ribosyl)imidazole + ADP + phosphate + H(+). Its pathway is purine metabolism; IMP biosynthesis via de novo pathway; 5-amino-1-(5-phospho-D-ribosyl)imidazole from N(2)-formyl-N(1)-(5-phospho-D-ribosyl)glycinamide: step 2/2. This is Phosphoribosylformylglycinamidine cyclo-ligase from Streptococcus thermophilus (strain ATCC BAA-491 / LMD-9).